Here is a 319-residue protein sequence, read N- to C-terminus: Cytochrome f (319 aa).

A signal peptide spans 1–35 (MFQQMQKISLKLLKTTFLFLFATFILVGLPSTSQA). Tyr36, Cys56, Cys59, and His60 together coordinate heme. The chain crosses the membrane as a helical span at residues 285–305 (IQGLIAFFISVIIAQTFLVLK).

The protein belongs to the cytochrome f family. The 4 large subunits of the cytochrome b6-f complex are cytochrome b6, subunit IV (17 kDa polypeptide, petD), cytochrome f and the Rieske protein, while the 4 small subunits are PetG, PetL, PetM and PetN. The complex functions as a dimer. Heme is required as a cofactor.

The protein localises to the plastid. It localises to the chloroplast thylakoid membrane. Component of the cytochrome b6-f complex, which mediates electron transfer between photosystem II (PSII) and photosystem I (PSI), cyclic electron flow around PSI, and state transitions. In Chlorokybus atmophyticus (Soil alga), this protein is Cytochrome f.